A 404-amino-acid chain; its full sequence is Protrudin (404 aa).

Residues 1-20 form a disordered region; the sequence is MQTSEREGCGPEVSPSTVPE. The Cytoplasmic segment spans residues 1 to 66; it reads MQTSEREGCG…AGDGVRYLLR (66 aa). Positions 1 to 92 are sufficient for homooligomerization; the sequence is MQTSEREGCG…LFLTLNEGAW (92 aa). The tract at residues 1 to 205 is sufficient for localization to endoplasmic reticulum tubular network and for interactions with REEP1, REEP5, ATL1, ATL2, ATL3 and SPAST; the sequence is MQTSEREGCG…LYLLPLCWVL (205 aa). The interval 51–64 is necessary for interaction with RAB11A and function in neurite outgrowth; that stretch reads LEPLKDAGDGVRYL. A helical membrane pass occupies residues 67–87; the sequence is WQTPLCSLLTCLGLNVLFLTL. A topological domain (lumenal) is located at residue N88. A helical membrane pass occupies residues 89–109; it reads EGAWYSVGALMISVPALLGYL. Over 110 to 187 the chain is Cytoplasmic; it reads QEGCQARLSE…NPAVSSQFYG (78 aa). The segment at residues 188–208 is an intramembrane region (helical); the sequence is ALLGTVCMLYLLPLCWVLALL. At 209–404 the chain is on the cytoplasmic side; the sequence is NSTLFLGNVE…CASCNQTLSK (196 aa). The segment at 234–286 is disordered; the sequence is MNPKQEESAFESPPPSDAGGKGALVDCTPAPTPTEDLTPGSVEEAEEAEPDEE. The tract at residues 271–354 is necessary for interaction with KIF5A; sequence TPGSVEEAEE…GCSATFSVLK (84 aa). A compositionally biased stretch (acidic residues) spans 276-286; it reads EEAEEAEPDEE. Positions 286-292 are necessary for interaction with VAPA; the sequence is EFKDAIE. Residues 337-403 form an FYVE-type zinc finger; it reads TNNYGSCTGC…VCASCNQTLS (67 aa). Zn(2+)-binding residues include C343, C346, C359, C362, C367, C370, C395, and C398.

Can form homooligomers (monomers, dimers and tetramers). Interacts with RAB11A (GDP-bound form); regulates RAB11A. Interacts with FKBP8; may negatively regulate ZFYVE27 phosphorylation. Interacts with VAPA (via MSP domain); may regulate ZFYVE27 retention in the endoplasmic reticulum and its function in cell projections formation. Interacts with VAPB (via MSP domain). Interacts with RAB11B (GDP-bound form), REEP1, REEP5, ATL1, ATL2, ATL3, SPAST, SURF4, KIF5A, KIF5B, KIF5C and RTN3. Phosphorylated. Phosphorylation is induced by NGF through the MAPK/ERK pathway and modulates interaction with RAB11A.

The protein resides in the recycling endosome membrane. It is found in the endoplasmic reticulum membrane. The protein localises to the cell projection. It localises to the growth cone membrane. In terms of biological role, key regulator of RAB11-dependent vesicular trafficking during neurite extension through polarized membrane transport. Promotes axonal elongation and contributes to the establishment of neuronal cell polarity. Involved in nerve growth factor-induced neurite formation in VAPA-dependent manner. Contributes to both the formation and stabilization of the tubular ER network. Involved in ER morphogenesis by regulating the sheet-to-tubule balance and possibly the density of tubule interconnections. Acts as an adapter protein that facilitates the interaction of KIF5A with VAPA, VAPB, SURF4, RAB11A, RAB11B and RTN3 and the ZFYVE27-KIF5A complex contributes to the transport of these proteins in neurons. Can induce formation of neurite-like membrane protrusions in non-neuronal cells in a KIF5A/B-dependent manner. In Bos taurus (Bovine), this protein is Protrudin (ZFYVE27).